The primary structure comprises 301 residues: 33 kDa chaperonin (301 aa).

2 disulfides stabilise this stretch: Cys-239–Cys-241 and Cys-272–Cys-275.

This sequence belongs to the HSP33 family. Post-translationally, under oxidizing conditions two disulfide bonds are formed involving the reactive cysteines. Under reducing conditions zinc is bound to the reactive cysteines and the protein is inactive.

It is found in the cytoplasm. In terms of biological role, redox regulated molecular chaperone. Protects both thermally unfolding and oxidatively damaged proteins from irreversible aggregation. Plays an important role in the bacterial defense system toward oxidative stress. The sequence is that of 33 kDa chaperonin from Trichormus variabilis (strain ATCC 29413 / PCC 7937) (Anabaena variabilis).